Reading from the N-terminus, the 291-residue chain is N-acetylmannosamine kinase (291 aa).

ATP is bound by residues 5-12 and 132-139; these read AIDIGGTK and GVGGGVVS. Zn(2+)-binding residues include histidine 156, cysteine 166, cysteine 168, and cysteine 173.

It belongs to the ROK (NagC/XylR) family. NanK subfamily. Homodimer.

The enzyme catalyses an N-acyl-D-mannosamine + ATP = an N-acyl-D-mannosamine 6-phosphate + ADP + H(+). It participates in amino-sugar metabolism; N-acetylneuraminate degradation; D-fructose 6-phosphate from N-acetylneuraminate: step 2/5. Its function is as follows. Catalyzes the phosphorylation of N-acetylmannosamine (ManNAc) to ManNAc-6-P. This Escherichia coli O127:H6 (strain E2348/69 / EPEC) protein is N-acetylmannosamine kinase.